A 377-amino-acid polypeptide reads, in one-letter code: MFNPHALDSPAVIFDNGSGFCKAGLSGEFGPRHMVSSIVGHLKFQAPSAEANQKKYFVGEEALYKQEALQLHSPFERGLITGWDDVERLWKHLFEWELGVKPSDQPLLATEPSLNPRENREKMAEVMFENFGVPAFYLSDQAVLALYASACVTGLVVDSGDAVTCTVPIFEGYSLPHAVTKLHVAGRDITELLMQLLLASGHTFPCQLDKGLVDDIKKKLCYVALEPEKELSRRPEEVLREYKLPDGNIISLGDPLHQAPEALFVPQQLGSQSPGLSNMVSSSITKCDTDIQKILFGEIVLSGGTTLFHGLDDRLLKELEQLASKDTPIKITAPPDRWFSTWIGASIVTSLSSFKQMWVTAADFKEFGTSVVQRRCF.

It belongs to the actin family.

It localises to the cytoplasm. The protein localises to the cytoskeleton. The sequence is that of Actin-related protein T2 (ACTRT2) from Homo sapiens (Human).